The sequence spans 314 residues: Large ribosomal subunit protein uL10 (314 aa).

Residues 281-314 form a disordered region; sequence GSTQETPEEKKEEAKKEEKSPDESISEGLGALFQ. Over residues 287–302 the composition is skewed to basic and acidic residues; sequence PEEKKEEAKKEEKSPD.

Belongs to the universal ribosomal protein uL10 family. As to quaternary structure, part of the 50S ribosomal subunit. Forms part of the ribosomal stalk which helps the ribosome interact with GTP-bound translation factors. Forms a heptameric L10(L12)2(L12)2(L12)2 complex, where L10 forms an elongated spine to which the L12 dimers bind in a sequential fashion.

Forms part of the ribosomal stalk, playing a central role in the interaction of the ribosome with GTP-bound translation factors. This chain is Large ribosomal subunit protein uL10, found in Thermoplasma acidophilum (strain ATCC 25905 / DSM 1728 / JCM 9062 / NBRC 15155 / AMRC-C165).